The primary structure comprises 156 residues: ATP synthase subunit b (156 aa).

Residues 7-27 (FFAQMVVFFILWWVVAKFIWP) traverse the membrane as a helical segment.

It belongs to the ATPase B chain family. F-type ATPases have 2 components, F(1) - the catalytic core - and F(0) - the membrane proton channel. F(1) has five subunits: alpha(3), beta(3), gamma(1), delta(1), epsilon(1). F(0) has three main subunits: a(1), b(2) and c(10-14). The alpha and beta chains form an alternating ring which encloses part of the gamma chain. F(1) is attached to F(0) by a central stalk formed by the gamma and epsilon chains, while a peripheral stalk is formed by the delta and b chains.

The protein localises to the cell inner membrane. Its function is as follows. F(1)F(0) ATP synthase produces ATP from ADP in the presence of a proton or sodium gradient. F-type ATPases consist of two structural domains, F(1) containing the extramembraneous catalytic core and F(0) containing the membrane proton channel, linked together by a central stalk and a peripheral stalk. During catalysis, ATP synthesis in the catalytic domain of F(1) is coupled via a rotary mechanism of the central stalk subunits to proton translocation. Component of the F(0) channel, it forms part of the peripheral stalk, linking F(1) to F(0). The protein is ATP synthase subunit b of Cupriavidus taiwanensis (strain DSM 17343 / BCRC 17206 / CCUG 44338 / CIP 107171 / LMG 19424 / R1) (Ralstonia taiwanensis (strain LMG 19424)).